The chain runs to 542 residues: Peptide chain release factor 3 (542 aa).

The region spanning E14–G283 is the tr-type G domain. GTP-binding positions include S23–T30, D91–H95, and N145–D148.

Belongs to the TRAFAC class translation factor GTPase superfamily. Classic translation factor GTPase family. PrfC subfamily.

The protein resides in the cytoplasm. Increases the formation of ribosomal termination complexes and stimulates activities of RF-1 and RF-2. It binds guanine nucleotides and has strong preference for UGA stop codons. It may interact directly with the ribosome. The stimulation of RF-1 and RF-2 is significantly reduced by GTP and GDP, but not by GMP. This chain is Peptide chain release factor 3, found in Nostoc punctiforme (strain ATCC 29133 / PCC 73102).